A 377-amino-acid polypeptide reads, in one-letter code: UDP-N-acetylglucosamine--N-acetylmuramyl-(pentapeptide) pyrophosphoryl-undecaprenol N-acetylglucosamine transferase (377 aa).

Residues 11 to 13 (TGG), N123, R164, S194, and Q295 contribute to the UDP-N-acetyl-alpha-D-glucosamine site.

Belongs to the glycosyltransferase 28 family. MurG subfamily.

The protein resides in the cell inner membrane. It carries out the reaction di-trans,octa-cis-undecaprenyl diphospho-N-acetyl-alpha-D-muramoyl-L-alanyl-D-glutamyl-meso-2,6-diaminopimeloyl-D-alanyl-D-alanine + UDP-N-acetyl-alpha-D-glucosamine = di-trans,octa-cis-undecaprenyl diphospho-[N-acetyl-alpha-D-glucosaminyl-(1-&gt;4)]-N-acetyl-alpha-D-muramoyl-L-alanyl-D-glutamyl-meso-2,6-diaminopimeloyl-D-alanyl-D-alanine + UDP + H(+). The protein operates within cell wall biogenesis; peptidoglycan biosynthesis. Cell wall formation. Catalyzes the transfer of a GlcNAc subunit on undecaprenyl-pyrophosphoryl-MurNAc-pentapeptide (lipid intermediate I) to form undecaprenyl-pyrophosphoryl-MurNAc-(pentapeptide)GlcNAc (lipid intermediate II). The chain is UDP-N-acetylglucosamine--N-acetylmuramyl-(pentapeptide) pyrophosphoryl-undecaprenol N-acetylglucosamine transferase from Opitutus terrae (strain DSM 11246 / JCM 15787 / PB90-1).